A 217-amino-acid chain; its full sequence is Methylthioribulose-1-phosphate dehydratase (217 aa).

Zn(2+) is bound by residues His-106 and His-108.

It belongs to the aldolase class II family. MtnB subfamily. Zn(2+) serves as cofactor.

It carries out the reaction 5-(methylsulfanyl)-D-ribulose 1-phosphate = 5-methylsulfanyl-2,3-dioxopentyl phosphate + H2O. It participates in amino-acid biosynthesis; L-methionine biosynthesis via salvage pathway; L-methionine from S-methyl-5-thio-alpha-D-ribose 1-phosphate: step 2/6. Functionally, catalyzes the dehydration of methylthioribulose-1-phosphate (MTRu-1-P) into 2,3-diketo-5-methylthiopentyl-1-phosphate (DK-MTP-1-P). This is Methylthioribulose-1-phosphate dehydratase from Xanthomonas campestris pv. campestris (strain B100).